The sequence spans 267 residues: Tryptophan synthase alpha chain (267 aa).

Catalysis depends on proton acceptor residues Glu49 and Asp60.

This sequence belongs to the TrpA family. Tetramer of two alpha and two beta chains.

It catalyses the reaction (1S,2R)-1-C-(indol-3-yl)glycerol 3-phosphate + L-serine = D-glyceraldehyde 3-phosphate + L-tryptophan + H2O. The protein operates within amino-acid biosynthesis; L-tryptophan biosynthesis; L-tryptophan from chorismate: step 5/5. The alpha subunit is responsible for the aldol cleavage of indoleglycerol phosphate to indole and glyceraldehyde 3-phosphate. The polypeptide is Tryptophan synthase alpha chain (Pelobacter propionicus (strain DSM 2379 / NBRC 103807 / OttBd1)).